A 121-amino-acid polypeptide reads, in one-letter code: Non-specific lipid-transfer protein 3 (121 aa).

An N-terminal signal peptide occupies residues 1 to 28; that stretch reads MAGARRTMALVALVAVVAAAVVAERASA. Intrachain disulfides connect cysteine 32-cysteine 80, cysteine 42-cysteine 57, cysteine 58-cysteine 103, and cysteine 78-cysteine 117.

The protein belongs to the plant LTP family.

In terms of biological role, plant non-specific lipid-transfer proteins transfer phospholipids as well as galactolipids across membranes. May play a role in wax or cutin deposition in the cell walls of expanding epidermal cells and certain secretory tissues. May possess an antifungal activity and protect the plant against pathogens. In Oryza sativa subsp. indica (Rice), this protein is Non-specific lipid-transfer protein 3 (LTP110-A).